We begin with the raw amino-acid sequence, 544 residues long: Chaperonin GroEL (544 aa).

ATP contacts are provided by residues 29–32 (TLGP), 86–90 (DGTTT), G413, 476–478 (NAA), and D492.

This sequence belongs to the chaperonin (HSP60) family. In terms of assembly, forms a cylinder of 14 subunits composed of two heptameric rings stacked back-to-back. Interacts with the co-chaperonin GroES.

Its subcellular location is the cytoplasm. It carries out the reaction ATP + H2O + a folded polypeptide = ADP + phosphate + an unfolded polypeptide.. Functionally, together with its co-chaperonin GroES, plays an essential role in assisting protein folding. The GroEL-GroES system forms a nano-cage that allows encapsulation of the non-native substrate proteins and provides a physical environment optimized to promote and accelerate protein folding. This Halalkalibacterium halodurans (strain ATCC BAA-125 / DSM 18197 / FERM 7344 / JCM 9153 / C-125) (Bacillus halodurans) protein is Chaperonin GroEL.